The sequence spans 175 residues: uncharacterized protein (175 aa).

Positions 1–23 (MILVLLLILIAFLYIYFPSSLNQ) are cleaved as a signal peptide.

This is an uncharacterized protein from Invertebrate iridescent virus 6 (IIV-6).